The primary structure comprises 165 residues: Ribosome maturation factor RimM (165 aa).

Positions 94–165 constitute a PRC barrel domain; the sequence is EDEFYIADLT…YVILNYQREA (72 aa).

This sequence belongs to the RimM family. Binds ribosomal protein uS19.

It localises to the cytoplasm. An accessory protein needed during the final step in the assembly of 30S ribosomal subunit, possibly for assembly of the head region. Essential for efficient processing of 16S rRNA. May be needed both before and after RbfA during the maturation of 16S rRNA. It has affinity for free ribosomal 30S subunits but not for 70S ribosomes. In Rickettsia rickettsii (strain Sheila Smith), this protein is Ribosome maturation factor RimM.